A 698-amino-acid polypeptide reads, in one-letter code: Elongation factor G 1 (698 aa).

Residues 8–290 form the tr-type G domain; that stretch reads ERYRNIGICA…AVIEFLPAPV (283 aa). Residues 17–24, 88–92, and 142–145 contribute to the GTP site; these read AHVDAGKT, DTPGH, and NKMD.

This sequence belongs to the TRAFAC class translation factor GTPase superfamily. Classic translation factor GTPase family. EF-G/EF-2 subfamily.

The protein resides in the cytoplasm. Its function is as follows. Catalyzes the GTP-dependent ribosomal translocation step during translation elongation. During this step, the ribosome changes from the pre-translocational (PRE) to the post-translocational (POST) state as the newly formed A-site-bound peptidyl-tRNA and P-site-bound deacylated tRNA move to the P and E sites, respectively. Catalyzes the coordinated movement of the two tRNA molecules, the mRNA and conformational changes in the ribosome. This Aliivibrio fischeri (strain ATCC 700601 / ES114) (Vibrio fischeri) protein is Elongation factor G 1.